The following is a 422-amino-acid chain: Ferrochelatase, mitochondrial (422 aa).

Residues 1 to 53 constitute a mitochondrion transit peptide; the sequence is MLSASANMAAALRAAGALLREPLVHGSSRACQPWRCQSGAAVAATTEKVHHAK. At lysine 56 the chain carries N6-acetyllysine. Positions 114, 122, and 129 each coordinate protoporphyrin IX. Lysine 137 is subject to N6-succinyllysine. A [2Fe-2S] cluster-binding site is contributed by cysteine 195. Histidine 229 is a catalytic residue. Residue lysine 289 is modified to N6-acetyllysine; alternate. N6-succinyllysine; alternate is present on lysine 289. The active site involves aspartate 382. [2Fe-2S] cluster contacts are provided by cysteine 402, cysteine 405, and cysteine 410. Lysine 414 bears the N6-acetyllysine; alternate mark. Lysine 414 is subject to N6-succinyllysine; alternate.

It belongs to the ferrochelatase family. As to quaternary structure, homodimer. Homotetramer. Interaction with PGRMC1; the interaction results in decreased FECH activity. Interacts with ABCB10 and SLC25A37; this interaction forms an oligomeric complex. Forms a complex with ABCB7 and ABCB10, where a dimeric FECH bridges ABCB7 and ABCB10 homodimers; this complex may be required for cellular iron homeostasis, mitochondrial function and heme biosynthesis. Interacts with ABCB7 and ABCB10. The cofactor is [2Fe-2S] cluster. As to expression, erythroid and hepatic cells.

Its subcellular location is the mitochondrion inner membrane. The enzyme catalyses heme b + 2 H(+) = protoporphyrin IX + Fe(2+). It participates in porphyrin-containing compound metabolism; protoheme biosynthesis; protoheme from protoporphyrin-IX: step 1/1. Functionally, catalyzes the ferrous insertion into protoporphyrin IX. This is Ferrochelatase, mitochondrial from Mus musculus (Mouse).